We begin with the raw amino-acid sequence, 348 residues long: Carbamoyl phosphate synthase small chain (348 aa).

A CPSase region spans residues 1–167; that stretch reads MKRYLITSDG…VKNIRGKGER (167 aa). L-glutamine-binding residues include serine 45, glycine 213, and glycine 215. The Glutamine amidotransferase type-1 domain maps to 168-348; the sequence is RILFIDLGSK…RRRTEDAAKG (181 aa). The active-site Nucleophile is the cysteine 242. The L-glutamine site is built by phenylalanine 243, glutamine 246, asparagine 282, glycine 284, and tyrosine 285. Residues histidine 321 and glutamate 323 contribute to the active site.

It belongs to the CarA family. In terms of assembly, composed of two chains; the small (or glutamine) chain promotes the hydrolysis of glutamine to ammonia, which is used by the large (or ammonia) chain to synthesize carbamoyl phosphate. Tetramer of heterodimers (alpha,beta)4.

The catalysed reaction is hydrogencarbonate + L-glutamine + 2 ATP + H2O = carbamoyl phosphate + L-glutamate + 2 ADP + phosphate + 2 H(+). It carries out the reaction L-glutamine + H2O = L-glutamate + NH4(+). It participates in amino-acid biosynthesis; L-arginine biosynthesis; carbamoyl phosphate from bicarbonate: step 1/1. Its pathway is pyrimidine metabolism; UMP biosynthesis via de novo pathway; (S)-dihydroorotate from bicarbonate: step 1/3. In terms of biological role, small subunit of the glutamine-dependent carbamoyl phosphate synthetase (CPSase). CPSase catalyzes the formation of carbamoyl phosphate from the ammonia moiety of glutamine, carbonate, and phosphate donated by ATP, constituting the first step of 2 biosynthetic pathways, one leading to arginine and/or urea and the other to pyrimidine nucleotides. The small subunit (glutamine amidotransferase) binds and cleaves glutamine to supply the large subunit with the substrate ammonia. In Thermoplasma acidophilum (strain ATCC 25905 / DSM 1728 / JCM 9062 / NBRC 15155 / AMRC-C165), this protein is Carbamoyl phosphate synthase small chain.